We begin with the raw amino-acid sequence, 89 residues long: Small ribosomal subunit protein bS16 (89 aa).

Belongs to the bacterial ribosomal protein bS16 family.

The sequence is that of Small ribosomal subunit protein bS16 from Psychrobacter arcticus (strain DSM 17307 / VKM B-2377 / 273-4).